Reading from the N-terminus, the 258-residue chain is Small ribosomal subunit protein mS23 (258 aa).

The protein belongs to the mitochondrion-specific ribosomal protein mS23 family. Component of the mitochondrial small ribosomal subunit.

It localises to the mitochondrion. In Aspergillus fumigatus (strain ATCC MYA-4609 / CBS 101355 / FGSC A1100 / Af293) (Neosartorya fumigata), this protein is Small ribosomal subunit protein mS23 (rsm25).